A 356-amino-acid chain; its full sequence is GTPase HflX (356 aa).

Positions 180–356 (PSIGIVGYTN…KIYQLATQLS (177 aa)) constitute a Hflx-type G domain. Residues 186-193 (GYTNSGKT), 211-215 (FTTMS), 232-235 (DTVG), 300-303 (NKID), and 334-336 (SAL) contribute to the GTP site. Residues T193 and T213 each coordinate Mg(2+).

This sequence belongs to the TRAFAC class OBG-HflX-like GTPase superfamily. HflX GTPase family. Monomer. Associates with the 50S ribosomal subunit. Does not associate with 70S ribosomes. Mg(2+) serves as cofactor.

It localises to the cytoplasm. With respect to regulation, GTPase activity is stimulated by the presence of 50S ribosomal subunits. Hydrolysis is probably regulated by the HflX N-terminal domain. Functionally, GTPase that associates with the 50S ribosomal subunit and may have a role during protein synthesis or ribosome biogenesis. Specific for GTP. The protein is GTPase HflX of Saccharolobus solfataricus (strain ATCC 35092 / DSM 1617 / JCM 11322 / P2) (Sulfolobus solfataricus).